Here is a 338-residue protein sequence, read N- to C-terminus: Fructose-1,6-bisphosphatase class 1 (338 aa).

E92, D115, L117, and D118 together coordinate Mg(2+). Residues 118–121, N211, Y244, 262–264, and K274 contribute to the substrate site; these read DGSS and YLY. Residue E280 participates in Mg(2+) binding.

Belongs to the FBPase class 1 family. Homotetramer. The cofactor is Mg(2+).

The protein resides in the cytoplasm. The catalysed reaction is beta-D-fructose 1,6-bisphosphate + H2O = beta-D-fructose 6-phosphate + phosphate. It functions in the pathway carbohydrate biosynthesis; gluconeogenesis. The sequence is that of Fructose-1,6-bisphosphatase class 1 from Vibrio parahaemolyticus serotype O3:K6 (strain RIMD 2210633).